The sequence spans 228 residues: Archaeal flagellar ATP-binding protein FlaH (228 aa).

ATP contacts are provided by glycine 30, threonine 31, lysine 33, serine 34, valine 35, glutamate 57, and lysine 191. Serine 34 contributes to the Mg(2+) binding site. Mg(2+) is bound at residue glutamate 57.

This sequence belongs to the FlaH family. As to quaternary structure, the S.acidocaldarius archaellum assembly machinery and its filament consist of seven proteins (FlaB, FlaF, FlaG, FlaH, FlaI, FlaJ and FlaX). Interacts directly with the FlaX ring and the motor ATPase FlaI. Monomers, which can probably form homohexamers upon binding to ATP. In vitro, FlaH assembles as a second ring inside the FlaX ring.

It localises to the archaeal flagellum. It is found in the cytoplasm. Component of the archaellum. FlaX, FlaH and FlaI form the core cytoplasmic motor complex of the crenarchaeal archaellum. FlaH binds ATP with high affinity but lacks detectable in vitro ATPase activity. ATP binding is essential for interaction with FlaI and for archaellum assembly. This is Archaeal flagellar ATP-binding protein FlaH from Sulfolobus acidocaldarius (strain ATCC 33909 / DSM 639 / JCM 8929 / NBRC 15157 / NCIMB 11770).